A 136-amino-acid chain; its full sequence is Small ribosomal subunit protein eS19 (136 aa).

Position 23 is an N6-acetyllysine (lysine 23). The residue at position 67 (arginine 67) is an Omega-N-methylarginine. Residues lysine 111 and lysine 115 each carry the N6-acetyllysine modification. Positions 116 to 136 (DQDGGRKLTPQGQRDLDRIAG) are disordered.

It belongs to the eukaryotic ribosomal protein eS19 family. As to quaternary structure, component of the small ribosomal subunit. Part of the small subunit (SSU) processome, composed of more than 70 proteins and the RNA chaperone small nucleolar RNA (snoRNA) U3. Interacts with RPS19BP1; the interaction is direct and mediates the integration of RPS19 in state post-A1. Interacts with RPS19BP1.

It is found in the cytoplasm. The protein resides in the nucleus. It localises to the nucleolus. Functionally, component of the small ribosomal subunit. The ribosome is a large ribonucleoprotein complex responsible for the synthesis of proteins in the cell. Required for pre-rRNA processing and maturation of 40S ribosomal subunits. Part of the small subunit (SSU) processome, first precursor of the small eukaryotic ribosomal subunit. During the assembly of the SSU processome in the nucleolus, many ribosome biogenesis factors, an RNA chaperone and ribosomal proteins associate with the nascent pre-rRNA and work in concert to generate RNA folding, modifications, rearrangements and cleavage as well as targeted degradation of pre-ribosomal RNA by the RNA exosome. This chain is Small ribosomal subunit protein eS19 (RPS19), found in Sus scrofa (Pig).